Here is a 215-residue protein sequence, read N- to C-terminus: Probable phosphoglycerate mutase GpmB (215 aa).

Substrate is bound by residues 8–15 (RHGETQWN), 21–22 (QG), arginine 58, lysine 60, 82–85 (ELDM), 104–105 (RR), and 151–152 (GI). Residue histidine 9 is the Tele-phosphohistidine intermediate of the active site. The active-site Proton donor/acceptor is glutamate 82.

It belongs to the phosphoglycerate mutase family. GpmB subfamily.

It catalyses the reaction (2R)-2-phosphoglycerate = (2R)-3-phosphoglycerate. The protein operates within carbohydrate degradation; glycolysis; pyruvate from D-glyceraldehyde 3-phosphate: step 3/5. The protein is Probable phosphoglycerate mutase GpmB of Salmonella choleraesuis (strain SC-B67).